We begin with the raw amino-acid sequence, 323 residues long: o-succinylbenzoate synthase (323 aa).

K134 functions as the Proton donor in the catalytic mechanism. Residues D162, E191, and D214 each contribute to the Mg(2+) site. K236 serves as the catalytic Proton acceptor.

It belongs to the mandelate racemase/muconate lactonizing enzyme family. MenC type 1 subfamily. A divalent metal cation is required as a cofactor.

The enzyme catalyses (1R,6R)-6-hydroxy-2-succinyl-cyclohexa-2,4-diene-1-carboxylate = 2-succinylbenzoate + H2O. It participates in quinol/quinone metabolism; 1,4-dihydroxy-2-naphthoate biosynthesis; 1,4-dihydroxy-2-naphthoate from chorismate: step 4/7. Its pathway is quinol/quinone metabolism; menaquinone biosynthesis. Converts 2-succinyl-6-hydroxy-2,4-cyclohexadiene-1-carboxylate (SHCHC) to 2-succinylbenzoate (OSB). In Yersinia pseudotuberculosis serotype IB (strain PB1/+), this protein is o-succinylbenzoate synthase.